The sequence spans 363 residues: Outer membrane porin F (363 aa).

Positions 1–22 (MMKRKILAAVIPALLAAATANA) are cleaved as a signal peptide. The beta stranded transmembrane segment at 23–28 (AEIYNK) threads the bilayer. Asp29 is a topological domain (periplasmic). A beta stranded membrane pass occupies residues 30 to 45 (GNKLDLYGKAVGRHVW). Topologically, residues 46 to 56 (TTTGDSKNADQ) are extracellular. Residues 57 to 69 (TYAQIGFKGETQI) traverse the membrane as a beta stranded segment. Over 70-71 (NT) the chain is Periplasmic. Residues 72–84 (DLTGFGQWEYRTK) form a beta stranded membrane-spanning segment. At 85–99 (ADRAEGEQQNSNLVR) the chain is on the extracellular side. A beta stranded transmembrane segment spans residues 100-108 (LAFAGLKYA). Position 109 (Glu109) is a topological domain, periplasmic. Residues 110–117 (VGSIDYGR) traverse the membrane as a beta stranded segment. The Extracellular portion of the chain corresponds to 118–154 (NYGIVYDVESYTDMAPYFSGETWGGAYTDNYMTSRAG). Residues 155 to 161 (GLLTYRN) traverse the membrane as a beta stranded segment. Over 162–169 (SDFFGLVD) the chain is Periplasmic. The chain crosses the membrane as a beta stranded span at residues 170 to 181 (GLSFGIQYQGKN). The Extracellular portion of the chain corresponds to 182-192 (QDNHSINSQNG). A beta stranded transmembrane segment spans residues 193–203 (DGVGYTMAYEF). Residue Asp204 is a topological domain, periplasmic. The beta stranded transmembrane segment at 205–217 (GFGVTAAYSNSKR) threads the bilayer. The Extracellular portion of the chain corresponds to 218–230 (TNDQQDRDGNGDR). Residues 231-242 (AESWAVGAKYDA) form a beta stranded membrane-spanning segment. Residue Asn243 is a topological domain, periplasmic. The beta stranded transmembrane segment at 244-256 (NVYLAAVYAETRN) threads the bilayer. Residues 257–272 (MSIVENTVTDTVEMAN) lie on the Extracellular side of the membrane. A beta stranded transmembrane segment spans residues 273-285 (KTQNLEVVAQYQF). At 286–287 (DF) the chain is on the periplasmic side. A beta stranded membrane pass occupies residues 288-301 (GLRPAISYVQSKGK). At 302-312 (QLNGADGSADL) the chain is on the extracellular side. A beta stranded membrane pass occupies residues 313 to 324 (AKYIQAGATYYF). At 325 to 326 (NK) the chain is on the periplasmic side. A beta stranded membrane pass occupies residues 327-336 (NMNVWVDYRF). At 337–353 (NLLDENDYSSSYVGTDD) the chain is on the extracellular side. The beta stranded transmembrane segment at 354 to 363 (QAAVGITYQF) threads the bilayer.

It belongs to the Gram-negative porin family. Homotrimer. Forms mixed heterotrimers with OmpC and with PhoE; other mixed heterotrimers with other porins are also probable.

It is found in the cell outer membrane. Its function is as follows. Forms pores that allow passive diffusion of small molecules across the outer membrane. In Salmonella typhi, this protein is Outer membrane porin F (ompF).